A 464-amino-acid polypeptide reads, in one-letter code: MPIRAYCTICSDFFDNARDVAAITCGHTFHQECLLQWFHSAPHRTCPQCRIQVSSRQIINKLFFDIGGEEETVLDAESLKNEVDRIKASLLVKEKEKRECQGLVDSLREMLDVRNVTIQSQQKELGDMEMLCSTLKKQIKFLDKQQSETKAAKDEARKLRNKLKTMESIEVLLQSQRSEVEEMIRDMGSGQAAVEQLAIYCVSLKKEYENLKEVRKSSAEMTEKLRKELFSSNHKAQKAELELTKVREELSASQKELHSADKEIMSLKKKVEFLQKTLTTPTASNEAISRLIFESPAPIGLERPKLRPPMMGNDINLDVTFDIDTPEHNTQKSVVAPFKKMKFDNKEHPLSSPTKNPLQESKGLMSWAGGRTGADEDDDLTLPSFIKNSLLHKKPVGSLLGLRQNTGAVRTGFDGLGGRTKFIQPSNLTEIRPLHQKMKRKKVSRPTACTSSLANQPRLEDFLK.

The segment at C7–R50 adopts an RING-type; atypical zinc-finger fold. 2 coiled-coil regions span residues L142–D186 and A236–T277. The interval K439 to K464 is disordered. Positions Q456–K464 match the PIP-box motif.

The protein belongs to the TRAIP family.

The protein localises to the nucleus. The protein resides in the nucleoplasm. It localises to the nucleolus. It is found in the chromosome. Its subcellular location is the cytoplasm. The catalysed reaction is S-ubiquitinyl-[E2 ubiquitin-conjugating enzyme]-L-cysteine + [acceptor protein]-L-lysine = [E2 ubiquitin-conjugating enzyme]-L-cysteine + N(6)-ubiquitinyl-[acceptor protein]-L-lysine.. It participates in protein modification; protein ubiquitination. E3 ubiquitin ligase required to protect genome stability in response to replication stress. Acts as a key regulator of interstrand cross-link repair, which takes place when both strands of duplex DNA are covalently tethered together, thereby blocking replication and transcription. Controls the choice between the two pathways of replication-coupled interstrand-cross-link repair by mediating ubiquitination of mcm7 subunit of the CMG helicase complex. Short ubiquitin chains on mcm7 promote recruitment of DNA glycosylase neil3. If the interstrand cross-link cannot be cleaved by neil3, the ubiquitin chains continue to grow on mcm7, promoting the unloading of the CMG helicase complex by the vcp/p97 ATPase, enabling the Fanconi anemia DNA repair pathway. Only catalyzes ubiquitination of mcm7 when forks converge. Also involved in the repair of covalent DNA-protein cross-links (DPCs) during DNA synthesis: promotes ubiquitination of DPCs, leading to their degradation by the proteasome. Also acts as a negative regulator of innate immune signaling by inhibiting activation of NF-kappa-B mediated by TNF. The protein is E3 ubiquitin-protein ligase TRAIP of Xenopus laevis (African clawed frog).